Consider the following 163-residue polypeptide: NAD(P)H-quinone oxidoreductase subunit I, chloroplastic (163 aa).

2 consecutive 4Fe-4S ferredoxin-type domains span residues 55-84 and 95-124; these read GRIH…VDWK and LNYS…MTEE. [4Fe-4S] cluster is bound by residues C64, C67, C70, C74, C104, C107, C110, and C114.

Belongs to the complex I 23 kDa subunit family. As to quaternary structure, NDH is composed of at least 16 different subunits, 5 of which are encoded in the nucleus. [4Fe-4S] cluster is required as a cofactor.

The protein resides in the plastid. It is found in the chloroplast thylakoid membrane. The enzyme catalyses a plastoquinone + NADH + (n+1) H(+)(in) = a plastoquinol + NAD(+) + n H(+)(out). It catalyses the reaction a plastoquinone + NADPH + (n+1) H(+)(in) = a plastoquinol + NADP(+) + n H(+)(out). NDH shuttles electrons from NAD(P)H:plastoquinone, via FMN and iron-sulfur (Fe-S) centers, to quinones in the photosynthetic chain and possibly in a chloroplast respiratory chain. The immediate electron acceptor for the enzyme in this species is believed to be plastoquinone. Couples the redox reaction to proton translocation, and thus conserves the redox energy in a proton gradient. The chain is NAD(P)H-quinone oxidoreductase subunit I, chloroplastic from Glycine max (Soybean).